Here is a 285-residue protein sequence, read N- to C-terminus: Putative sugar uptake protein lmo0169 (285 aa).

Transmembrane regions (helical) follow at residues 5-24 (IALI…SKIG), 31-48 (IIGT…VFIF), 53-71 (YTAT…WSLG), 84-106 (VSKT…GVFA), 116-135 (LVLG…LTSY), 151-173 (IITL…WFDI), 178-195 (AILP…LFSI), 207-226 (WLNM…LLFS), 232-254 (IATG…ILFL), and 263-282 (LILV…MIGI).

The protein belongs to the GRP transporter (TC 2.A.7.5) family.

It is found in the cell membrane. The chain is Putative sugar uptake protein lmo0169 from Listeria monocytogenes serovar 1/2a (strain ATCC BAA-679 / EGD-e).